Reading from the N-terminus, the 880-residue chain is Valine--tRNA ligase (880 aa).

Residues 49–59 (PNVTGKLHLGH) carry the 'HIGH' region motif. Positions 525-529 (KMSKS) match the 'KMSKS' region motif. Residue Lys-528 participates in ATP binding. Positions 809-880 (LEGLINIEEE…VKARLAELKR (72 aa)) form a coiled coil.

This sequence belongs to the class-I aminoacyl-tRNA synthetase family. ValS type 1 subfamily. Monomer.

It is found in the cytoplasm. It catalyses the reaction tRNA(Val) + L-valine + ATP = L-valyl-tRNA(Val) + AMP + diphosphate. In terms of biological role, catalyzes the attachment of valine to tRNA(Val). As ValRS can inadvertently accommodate and process structurally similar amino acids such as threonine, to avoid such errors, it has a 'posttransfer' editing activity that hydrolyzes mischarged Thr-tRNA(Val) in a tRNA-dependent manner. The polypeptide is Valine--tRNA ligase (valS) (Geobacillus stearothermophilus (Bacillus stearothermophilus)).